A 256-amino-acid polypeptide reads, in one-letter code: Small ribosomal subunit protein eS1 (256 aa).

A2 carries the post-translational modification N-acetylalanine; partial.

This sequence belongs to the eukaryotic ribosomal protein eS1 family. Component of the small ribosomal subunit. Mature ribosomes consist of a small (40S) and a large (60S) subunit. The 40S subunit contains about 33 different proteins and 1 molecule of RNA (18S). The 60S subunit contains about 49 different proteins and 3 molecules of RNA (25S, 5.8S and 5S).

Its subcellular location is the cytoplasm. In Meyerozyma guilliermondii (strain ATCC 6260 / CBS 566 / DSM 6381 / JCM 1539 / NBRC 10279 / NRRL Y-324) (Yeast), this protein is Small ribosomal subunit protein eS1.